The following is a 627-amino-acid chain: Neuronal acetylcholine receptor subunit alpha-4 (627 aa).

The first 28 residues, 1–28 (MELGGPGAPRLLPPLLLLLGTGLLRASS), serve as a signal peptide directing secretion. Over 29 to 242 (HVETRAHAEE…ITYAFVIRRL (214 aa)) the chain is Extracellular. N-linked (GlcNAc...) asparagine glycosylation is present at Asn57. Ca(2+) is bound by residues Val76 and Glu78. 2 N-linked (GlcNAc...) asparagine glycosylation sites follow: Asn107 and Asn174. 2 disulfides stabilise this stretch: Cys161-Cys175 and Cys225-Cys226. Residues 243–267 (PLFYTINLIIPCLLISCLTVLVFYL) traverse the membrane as a helical segment. Cys271 carries the S-palmitoyl cysteine lipid modification. The next 2 membrane-spanning stretches (helical) occupy residues 275–293 (ITLC…LLIT) and 309–330 (YLLF…VLNV). Residues 331-600 (HHRSPRTHTM…WKYVAMVIDR (270 aa)) are Cytoplasmic-facing. Disordered regions lie at residues 382–479 (PRFW…EAVE) and 497–559 (DATS…RHLP). A phosphoserine mark is found at Ser424, Ser538, and Ser541. The chain crosses the membrane as a helical span at residues 601-619 (IFLWMFIIVCLLGTVGLFL).

The protein belongs to the ligand-gated ion channel (TC 1.A.9) family. Acetylcholine receptor (TC 1.A.9.1) subfamily. Alpha-4/CHRNA4 sub-subfamily. As to quaternary structure, neuronal AChR is composed of two different types of subunits: alpha and beta. CHRNA4 forms heteropentameric neuronal acetylcholine receptors with CHRNB2 and CHRNB4, as well as CHRNA5 and CHRNB3 as accesory subunits. Found in two major stoichiometric forms, LS (low agonist sensitivity): (CHRNA4)3:(CHRNB2)2 and HS (high agonist sensitivity): (CHRNA4)2:(CHRNB2)3, the two stoichiometric forms differ in their unitary conductance, calcium permeability, ACh sensitivity and potentiation by divalent cation. Cells produce predominantly an (CHRNA4)3:(CHRNB2)2 nAChR. The (CHRNA4)2:(CHRNB2)3 expression is selectively up-regulated by nicotine and has lower single channel conductance and calcium permeability. In the striatum, also forms CHRNA4:CHRNA6:CHRNB2 complexes. Also found in the stoichiometric form: (CHRNA4:CHRNB2)2:CHRNB3. Interacts with RIC3; which is required for proper folding and assembly. Interacts with LYPD6.

The protein localises to the synaptic cell membrane. It localises to the cell membrane. It carries out the reaction Ca(2+)(in) = Ca(2+)(out). The catalysed reaction is K(+)(in) = K(+)(out). The enzyme catalyses Na(+)(in) = Na(+)(out). Activated by a myriad of ligands such as acetylcholine, cytisine, nicotine, choline and epibatidine. Channel potentiation by calcium is stoichiometry-selective, CHRNA4:CHRNB2 nACh receptor is achieved by calcium association with topographically distinct sites framed by anionic residues within the CHRNA4 subunit and between the CHRNA4 and CHRNB2 subunits. nAChR activity is inhibited by the antagonist alpha-conotoxins BuIA, PnIA, GID and MII, small disulfide-constrained peptides from cone snails. Component of neuronal acetylcholine receptors (nAChRs) that function as pentameric, ligand-gated cation channels with high calcium permeability among other activities. nAChRs are excitatory neurotrasnmitter receptors formed by a collection of nAChR subunits known to mediate synaptic transmission in the nervous system and the neuromuscular junction. Each nAchR subunit confers differential attributes to channel properties, including activation, deactivation and desensitization kinetics, pH sensitivity, cation permeability, and binding to allosteric modulators. CHRNA4 forms heteropentameric neuronal acetylcholine receptors with CHRNB2 and CHRNB4, as well as CHRNA5 and CHRNB3 as accesory subunits. Is the most abundant nAChR subtype expressed in the central nervous system. Found in two major stoichiometric forms,(CHRNA4)3:(CHRNB2)2 and (CHRNA4)2:(CHRNB2)3, the two stoichiometric forms differ in their unitary conductance, calcium permeability, ACh sensitivity and potentiation by divalent cation. Involved in the modulation of calcium-dependent signaling pathways, influences the release of neurotransmitters, including dopamine, glutamate and GABA. The chain is Neuronal acetylcholine receptor subunit alpha-4 (CHRNA4) from Pan troglodytes (Chimpanzee).